A 466-amino-acid chain; its full sequence is MAVYTNPACRTNTSAFPGPYRPYSNPSRFSFNLDKFRPRTSAIKVPSICCTIAREMEKERSEREPDVLQRPDSFGRFGKFGGKYVPETLMYALTELESAFRSLSGDQVFQKELDGILKDYVGRESPLYFAERLTLHYKRPNGEGPEIYLKREDLNHTGAHKINNAVAQALLAKRLGKKRIIAETGAGQHGVATATVCARFGLQCVIYMGAQDMERQALNVFRMRLLGAEVRAVHSGTATLKDATSEAIRDWVTNVESTHYILGSVAGPHPYPMMVREFHAVIGKETRKQALEKWGGKPDVLVACVGGGSNAMGLFHEFVDDKDVRMIGVEAAGFGLDSGKHAATLTKGEVGVLHGAMSYLLQDDDGQIIEPHSISAGLDYPGVGPEHSFLKDIGRAEYYCCTDEEALEAFKRLSRLEGIIPALETSHALAFLEKLCPTLPNGTKVVLNCSGRGDKDVHTAIKHLQV.

An N6-(pyridoxal phosphate)lysine modification is found at Lys-161.

This sequence belongs to the TrpB family. In terms of assembly, tetramer of two alpha and two beta chains. Pyridoxal 5'-phosphate is required as a cofactor.

The protein localises to the plastid. It is found in the chloroplast. It catalyses the reaction (1S,2R)-1-C-(indol-3-yl)glycerol 3-phosphate + L-serine = D-glyceraldehyde 3-phosphate + L-tryptophan + H2O. It functions in the pathway amino-acid biosynthesis; L-tryptophan biosynthesis; L-tryptophan from chorismate: step 5/5. In terms of biological role, the beta subunit is responsible for the synthesis of L-tryptophan from indole and L-serine. This is Tryptophan synthase beta chain 2, chloroplastic (TSB) from Camptotheca acuminata (Happy tree).